Consider the following 506-residue polypeptide: Histidine ammonia-lyase (506 aa).

The 5-imidazolinone (Ala-Gly) cross-link spans A144–G146. The residue at position 145 (S145) is a 2,3-didehydroalanine (Ser).

Belongs to the PAL/histidase family. Contains an active site 4-methylidene-imidazol-5-one (MIO), which is formed autocatalytically by cyclization and dehydration of residues Ala-Ser-Gly.

It is found in the cytoplasm. It catalyses the reaction L-histidine = trans-urocanate + NH4(+). The protein operates within amino-acid degradation; L-histidine degradation into L-glutamate; N-formimidoyl-L-glutamate from L-histidine: step 1/3. This chain is Histidine ammonia-lyase, found in Legionella pneumophila (strain Lens).